The primary structure comprises 1366 residues: Protein HUA2-LIKE 2 (1366 aa).

A PWWP domain is found at 24–81 (VGDLVLAKVKGFPAWPAVVSEPEKWDASPDSKKVFVHFFGTQQIAFCNPGDVEAFTEE). The segment covering 111-124 (LKQQERASDPKSAE) has biased composition (basic and acidic residues). Disordered stretches follow at residues 111–138 (LKQQ…TLMP), 203–319 (TYSS…SGSK), 384–403 (NVQT…CEEN), 427–451 (EANS…AQTS), and 787–808 (SESA…TGEK). The segment covering 213 to 252 (VRSQNCAPQNETCPVQRSKSPSRLQTEKLQSSMLQNSDGG) has biased composition (polar residues). Over residues 391 to 403 (SHEKFTERPCEEN) the composition is skewed to basic and acidic residues. The span at 787 to 803 (SESANDMQNNSSGSPNI) shows a compositional bias: polar residues. One can recognise a CID domain in the interval 836–977 (DVQSTRESYE…HHIRELDSHS (142 aa)). Disordered regions lie at residues 1027 to 1076 (LKDE…TAER) and 1128 to 1366 (TSHQ…QRSD). Acidic residues predominate over residues 1032–1052 (GGSDSEGGCDSEGGSDSDGGD). Basic and acidic residues predominate over residues 1057–1066 (TPEHESRILE). Pro residues predominate over residues 1138 to 1152 (PPLPSSSPPPPPAPP). Positions 1191-1223 (LSGSTMHYQGPESSYISGVQLTNSIPQADGSNF) are enriched in polar residues. Residues 1229–1244 (PSHPHPHPPPPPPPPQ) are compositionally biased toward pro residues. Basic and acidic residues-rich tracts occupy residues 1251–1262 (EPGHVLKSHRDA) and 1275–1298 (CDER…RDNW). A compositionally biased stretch (low complexity) spans 1299-1309 (RYPPSSSYGSR).

Expressed throughout young primordia, and vegetative and reproductive apices.

The protein localises to the nucleus. Probable transcription factor that acts with partial redundancy with HULK1 and HULK3. Plays diverse and essential roles in the control of plant development, physiology and flowering time. This Arabidopsis thaliana (Mouse-ear cress) protein is Protein HUA2-LIKE 2.